Here is a 409-residue protein sequence, read N- to C-terminus: Single Ig IL-1-related receptor (409 aa).

The Extracellular portion of the chain corresponds to 1–117 (MAGVCDMAPN…TLWRAGPAGH (117 aa)). One can recognise an Ig-like C2-type domain in the interval 9-108 (PNFLSPSEDQ…VWNVSSHSFT (100 aa)). Residues asparagine 31, asparagine 58, asparagine 73, asparagine 85, and asparagine 101 are each glycosylated (N-linked (GlcNAc...) asparagine). Cysteine 32 and cysteine 97 are disulfide-bonded. A helical; Signal-anchor for type III membrane protein transmembrane segment spans residues 118–138 (VAAVLASLLVLVVLLLVALLY). At 139–409 (VKCRLNMLLW…FYCLVSEDDV (271 aa)) the chain is on the cytoplasmic side. The region spanning 162-306 (KLYDAYVSYS…DFWKELQLAL (145 aa)) is the TIR domain. At serine 382 the chain carries Phosphoserine.

The protein belongs to the interleukin-1 receptor family. In terms of assembly, interacts with IL1R1, IRAK1, TLR4, TLR5, TLR9 and TRAF6. Upon IL-1 stimulation found in a complex at least composed of IL1R1, SIGIRR, MYD88, IRAK1 and TRAF6. Upon stimulation with LPC found in a complex at least composed of TLR4, SIG1IR, MYD88, IRAK1 and TRAF6. Interacts with PALM3. As to expression, expressed at high levels in kidney, and at moderate levels in colon, small intestine, lung, spleen and liver. Not expressed in brain and muscle. Expressed at high levels in epithelial cells, at moderate levels in splenocytes, and at low or undetectable levels in fibroblasts or endothelial cells. Expressed in mucosal and dendritic cells.

The protein resides in the membrane. Functionally, acts as a negative regulator of the Toll-like and IL-1R receptor signaling pathways. Attenuates the recruitment of receptor-proximal signaling components to the TLR4 receptor, probably through an TIR-TIR domain interaction with TLR4. Through its extracellular domain interferes with the heterodimerization of Il1R1 and IL1RAP. This chain is Single Ig IL-1-related receptor (Sigirr), found in Mus musculus (Mouse).